Reading from the N-terminus, the 261-residue chain is Polycomb group RING finger protein 1 (261 aa).

An RING-type zinc finger spans residues 45 to 84 (CYLCAGYFIDATTITECLHTFCKSCIVKYLQTSKYCPMCN).

As to quaternary structure, component of a PRC1-like complex.

The protein resides in the nucleus. In terms of biological role, component of a Polycomb group (PcG) multiprotein PRC1-like complex, a complex class required to maintain the transcriptionally repressive state of many genes, including Hox genes, throughout development. PcG PRC1 complex acts via chromatin remodeling and modification of histones; it mediates monoubiquitination of histone H2A 'Lys-119', rendering chromatin heritably changed in its expressibility. This Danio rerio (Zebrafish) protein is Polycomb group RING finger protein 1 (pcgf1).